A 755-amino-acid chain; its full sequence is MKMSHLPFAWISDEAKCFLSRFFENISSLPVVDIRENPWILSQCIVKTGNSINNVKTLYNNLILWIYFHQTLCKKKPDYEEVWQEILKVQKILKDYLEQRQMITDYSSLTSFNKVGFETEFKNVAKDLLKLGSFLRWGTVTHAADYVNLTTEERAEIGENLQKAKNNMLSFTIYQIVDPWNENGYYVTNINRLLYLGNLLITLHGSWMNMEKLALNTINEKKNAILKAIENNKNFVSIYSYQILSLPLTSHRVTSFFKILTEDFDVITKSLELHALPVKSTWDDRVKFTPEPIQTFKVLTDLSKSSLSNQFESSSKKTSHGSSFNPEPFIKTEQRSNNTLSKDLFVGSEDGLLSSVKKDSMILDEPRNSTSINNSKKMHRILQTEILDLTDQTMHRPEDKVNQFNEIAVAPDGINQVIDTLSKLDLHNSNKVIDIVSSPKVNVVQLPKNKIDYHSTFFLPENEVNRQNGVQSRDQLSKNSTNDLQKILELRERIKTIKQNNEDIFKLPSEKRRKEIVHENLQSFDDEHNEMSLPPQDQKSIKQKNGNKANSSTKTLNMIGTNDVNASMKEKESASSAKKNQLVKDVKWTPSSSLLDLSRRNDLLQKELFESGLGEKVKKLLTDFTDTISLEERSLKDVLEPPKKTDVSNIATFNDNNLKNLLNSRKRDPLFQNFSFTEKMQPVRSPFFLPNAEIQDFDSGSLLTGKETQNTIFGASKAQENGDKDLIDLENSVQKDDDIVNKLVSHLTHSEEDVV.

Disordered regions lie at residues 312-333 and 522-555; these read ESSS…IKTE and QSFD…STKT. Residues 535-555 show a composition bias toward polar residues; that stretch reads PQDQKSIKQKNGNKANSSTKT.

It belongs to the herpesviridae large structural phosphoprotein family. Phosphorylated at multiple sites.

It is found in the virion tegument. In Homo sapiens (Human), this protein is Large structural phosphoprotein (U11).